Consider the following 174-residue polypeptide: Small heat shock protein OV25-1 (174 aa).

A sHSP domain is found at 50–161 (LNECNIGNTL…ASRNIPIRAS (112 aa)). The interval 153 to 174 (SRNIPIRASPKEPEAKQKTKKQ) is disordered. Basic and acidic residues predominate over residues 161–174 (SPKEPEAKQKTKKQ).

This sequence belongs to the small heat shock protein (HSP20) family.

The protein is Small heat shock protein OV25-1 (OV25-1) of Onchocerca volvulus.